The chain runs to 74 residues: UPF0352 protein HAPS_0210 (74 aa).

It belongs to the UPF0352 family.

The sequence is that of UPF0352 protein HAPS_0210 from Glaesserella parasuis serovar 5 (strain SH0165) (Haemophilus parasuis).